Reading from the N-terminus, the 313-residue chain is MKWIEVTIRTTTEAVEAVANVLYDAGVSGVAIEDPNDIVFVNNDEKTWDYVDEALIDFEQGALVKGYLPESSDLVEKIEIIKNSIAALPEFGLNIGAGEVSTLEVNEEDWSTSWKQYYKPTKIGNKIVIKPTWEEYIAQEGDMVIEMDPGMAFGTGTHETTMMCVEQLEKYISKDTTVFDIGTGSGILAIVGAKLGAKKAIGVDFDPVAVTVANENVRANKVENIVEIKQGNLMDVVSEKADVVVANIIAEVIVILSEDIKSFLNKNGIFISSGIILDKIDTVKESLVKNGLEVIHVETMGEWAAIVSKVKGA.

S-adenosyl-L-methionine is bound by residues Thr-161, Gly-182, Asp-204, and Asn-247.

It belongs to the methyltransferase superfamily. PrmA family.

It is found in the cytoplasm. It catalyses the reaction L-lysyl-[protein] + 3 S-adenosyl-L-methionine = N(6),N(6),N(6)-trimethyl-L-lysyl-[protein] + 3 S-adenosyl-L-homocysteine + 3 H(+). Methylates ribosomal protein L11. This Alkaliphilus oremlandii (strain OhILAs) (Clostridium oremlandii (strain OhILAs)) protein is Ribosomal protein L11 methyltransferase.